Here is a 226-residue protein sequence, read N- to C-terminus: Large ribosomal subunit protein uL1 (226 aa).

The protein belongs to the universal ribosomal protein uL1 family. In terms of assembly, part of the 50S ribosomal subunit.

Functionally, binds directly to 23S rRNA. The L1 stalk is quite mobile in the ribosome, and is involved in E site tRNA release. In terms of biological role, protein L1 is also a translational repressor protein, it controls the translation of the L11 operon by binding to its mRNA. This Mycoplasmoides gallisepticum (strain R(low / passage 15 / clone 2)) (Mycoplasma gallisepticum) protein is Large ribosomal subunit protein uL1.